We begin with the raw amino-acid sequence, 179 residues long: Avenin-like a2 (179 aa).

Residues 1–19 form the signal peptide; sequence MKTMFLLALLAFTATSAVA.

This sequence belongs to the prolamin family. Post-translationally, contains 7 disulfide bonds.

Its function is as follows. Seed storage protein. Not integrated in the gluten polymer through disulfide bonds, unless incorporated by reduction and reoxidation during dough making. Increases dough strength and bread volume, but decreases dough stability when added into a base wheat flour. The polypeptide is Avenin-like a2 (Triticum aestivum (Wheat)).